The following is a 1065-amino-acid chain: Pumilio domain-containing protein P35G2.14 (1065 aa).

3 disordered regions span residues methionine 1–serine 78, isoleucine 130–proline 265, and threonine 422–serine 573. Over residues arginine 16 to serine 44 the composition is skewed to polar residues. A compositionally biased stretch (low complexity) spans asparagine 59–arginine 77. Polar residues-rich tracts occupy residues leucine 134–threonine 151 and serine 169–proline 189. Composition is skewed to low complexity over residues serine 190–isoleucine 224 and serine 236–asparagine 246. Composition is skewed to polar residues over residues threonine 247–proline 262 and glycine 434–valine 455. Threonine 260 is subject to Phosphothreonine. The segment covering proline 470–serine 483 has biased composition (low complexity). 2 stretches are compositionally biased toward polar residues: residues leucine 495–proline 522 and isoleucine 529–arginine 551. Phosphoserine occurs at positions 506, 511, and 515. Phosphothreonine is present on threonine 554. Over residues asparagine 559 to serine 573 the composition is skewed to low complexity. The RRM domain occupies histidine 592–valine 666. The 354-residue stretch at aspartate 712–alanine 1065 folds into the PUM-HD domain. Pumilio repeat units follow at residues alanine 771–glutamate 808, arginine 809–alanine 844, histidine 846–asparagine 884, phenylalanine 886–alanine 917, alanine 919–threonine 954, and arginine 956–aspartate 993.

The protein resides in the cytoplasm. This chain is Pumilio domain-containing protein P35G2.14, found in Schizosaccharomyces pombe (strain 972 / ATCC 24843) (Fission yeast).